Here is a 362-residue protein sequence, read N- to C-terminus: Glutaminase-asparaginase (362 aa).

A signal peptide spans 1-25 (MNAALKTFAPSALALLLILPSSASA). Residues 35–362 (ANVVILATGG…KELQRIFWEY (328 aa)) form the Asparaginase/glutaminase domain. Catalysis depends on Thr-45, which acts as the Acyl-ester intermediate. Substrate is bound by residues Ser-92 and 125-126 (TD).

The protein belongs to the asparaginase 1 family. Homotetramer.

The protein localises to the periplasm. It catalyses the reaction L-glutamine + H2O = L-glutamate + NH4(+). It carries out the reaction L-asparagine + H2O = L-aspartate + NH4(+). This Pseudomonas putida (strain ATCC 47054 / DSM 6125 / CFBP 8728 / NCIMB 11950 / KT2440) protein is Glutaminase-asparaginase (ansB).